A 721-amino-acid polypeptide reads, in one-letter code: Polyribonucleotide nucleotidyltransferase (721 aa).

Residues D495 and D501 each contribute to the Mg(2+) site. The region spanning 562 to 621 (PRLLSFRIDPELIGTVIGPGGRTIKGITERTNTKIDIEDGGIVTIASHDGAAAEEAQKII) is the KH domain. An S1 motif domain is found at 631–699 (GEIFPGVVTR…SRGRINLTLR (69 aa)). Positions 702–721 (GQNGGMSYPEPTPTPVAPLS) are disordered. A compositionally biased stretch (pro residues) spans 711–721 (EPTPTPVAPLS).

The protein belongs to the polyribonucleotide nucleotidyltransferase family. Mg(2+) serves as cofactor.

The protein resides in the cytoplasm. The catalysed reaction is RNA(n+1) + phosphate = RNA(n) + a ribonucleoside 5'-diphosphate. In terms of biological role, involved in mRNA degradation. Catalyzes the phosphorolysis of single-stranded polyribonucleotides processively in the 3'- to 5'-direction. This Prochlorococcus marinus (strain MIT 9301) protein is Polyribonucleotide nucleotidyltransferase.